We begin with the raw amino-acid sequence, 194 residues long: Auxin-induced protein 22A (194 aa).

The EAR-like (transcriptional repression) motif lies at 13–17 (LRLGL). Positions 40 to 62 (EIDDVGDENSSSGGGGDRKMENK) are disordered. In terms of domain architecture, PB1 spans 85–173 (KMYVKVSMDG…KRLRIMKRAD (89 aa)).

This sequence belongs to the Aux/IAA family. In terms of assembly, homodimers and heterodimers.

The protein resides in the nucleus. Its function is as follows. Aux/IAA proteins are short-lived transcriptional factors that function as repressors of early auxin response genes at low auxin concentrations. Repression is thought to result from the interaction with auxin response factors (ARFs), proteins that bind to the auxin-responsive promoter element (AuxRE). Formation of heterodimers with ARF proteins may alter their ability to modulate early auxin response genes expression. In Vigna radiata var. radiata (Mung bean), this protein is Auxin-induced protein 22A (AUX22A).